The primary structure comprises 441 residues: GTPase Der (441 aa).

2 consecutive EngA-type G domains span residues 3 to 167 (PLIA…PKGS) and 176 to 351 (TKIA…EQFA). Residues 9–16 (GRPNVGKS), 56–60 (DTGGF), 119–122 (NKID), 182–189 (GRPNVGKS), 229–233 (DTAGI), and 294–297 (NKWD) contribute to the GTP site. Residues 352 to 436 (RRITTSDLNR…PMRLLFKGRE (85 aa)) enclose the KH-like domain.

This sequence belongs to the TRAFAC class TrmE-Era-EngA-EngB-Septin-like GTPase superfamily. EngA (Der) GTPase family. In terms of assembly, associates with the 50S ribosomal subunit.

Functionally, GTPase that plays an essential role in the late steps of ribosome biogenesis. In Geotalea uraniireducens (strain Rf4) (Geobacter uraniireducens), this protein is GTPase Der.